The primary structure comprises 314 residues: Probable cell division protein WhiA (314 aa).

The H-T-H motif DNA-binding region spans 274-308 (SLKELGEMMSTGKISKSGVNHRLRKLNEMADKLRS).

This sequence belongs to the WhiA family.

Its function is as follows. Involved in cell division and chromosome segregation. The chain is Probable cell division protein WhiA from Staphylococcus saprophyticus subsp. saprophyticus (strain ATCC 15305 / DSM 20229 / NCIMB 8711 / NCTC 7292 / S-41).